A 366-amino-acid chain; its full sequence is Ribosomal RNA large subunit methyltransferase M (366 aa).

S-adenosyl-L-methionine contacts are provided by residues Ser188, 221-224 (CPGG), Asp240, Asp260, and Asp277. Lys306 (proton acceptor) is an active-site residue.

It belongs to the class I-like SAM-binding methyltransferase superfamily. RNA methyltransferase RlmE family. RlmM subfamily. As to quaternary structure, monomer.

It localises to the cytoplasm. The catalysed reaction is cytidine(2498) in 23S rRNA + S-adenosyl-L-methionine = 2'-O-methylcytidine(2498) in 23S rRNA + S-adenosyl-L-homocysteine + H(+). Functionally, catalyzes the 2'-O-methylation at nucleotide C2498 in 23S rRNA. In Photorhabdus laumondii subsp. laumondii (strain DSM 15139 / CIP 105565 / TT01) (Photorhabdus luminescens subsp. laumondii), this protein is Ribosomal RNA large subunit methyltransferase M.